A 294-amino-acid polypeptide reads, in one-letter code: HTH-type transcriptional regulator XapR (294 aa).

Positions 7 to 64 (TDLKLLRYFLAVAEELHFGRAAARLNMSQPPLSIHIKELENQLGTQLFIRHSRSVVLT) constitute an HTH lysR-type domain. The H-T-H motif DNA-binding region spans 24 to 43 (FGRAAARLNMSQPPLSIHIK).

It belongs to the LysR transcriptional regulatory family.

Functionally, positive regulator required for the expression of xapA and xapB. Binds to the inducer xanthosine. The sequence is that of HTH-type transcriptional regulator XapR (xapR) from Escherichia coli (strain K12).